The primary structure comprises 459 residues: Putrescine aminotransferase (459 aa).

Pyridoxal 5'-phosphate-binding positions include 150–151 (GT) and Gln-274. Lys-300 is modified (N6-(pyridoxal phosphate)lysine). Residue Thr-332 coordinates pyridoxal 5'-phosphate.

The protein belongs to the class-III pyridoxal-phosphate-dependent aminotransferase family. Putrescine aminotransferase subfamily. Pyridoxal 5'-phosphate serves as cofactor.

The enzyme catalyses an alkane-alpha,omega-diamine + 2-oxoglutarate = an omega-aminoaldehyde + L-glutamate. It carries out the reaction putrescine + 2-oxoglutarate = 1-pyrroline + L-glutamate + H2O. The catalysed reaction is cadaverine + 2-oxoglutarate = 5-aminopentanal + L-glutamate. Its pathway is amine and polyamine degradation; putrescine degradation; 4-aminobutanal from putrescine (transaminase route): step 1/1. Functionally, catalyzes the aminotransferase reaction from putrescine to 2-oxoglutarate, leading to glutamate and 4-aminobutanal, which spontaneously cyclizes to form 1-pyrroline. This is the first step in one of two pathways for putrescine degradation, where putrescine is converted into 4-aminobutanoate (gamma-aminobutyrate or GABA) via 4-aminobutanal. Also functions as a cadaverine transaminase in a a L-lysine degradation pathway to succinate that proceeds via cadaverine, glutarate and L-2-hydroxyglutarate. The polypeptide is Putrescine aminotransferase (Shigella flexneri serotype 5b (strain 8401)).